The following is a 116-amino-acid chain: Large ribosomal subunit protein uL18 (116 aa).

The protein belongs to the universal ribosomal protein uL18 family. Part of the 50S ribosomal subunit; part of the 5S rRNA/L5/L18/L25 subcomplex. Contacts the 5S and 23S rRNAs.

In terms of biological role, this is one of the proteins that bind and probably mediate the attachment of the 5S RNA into the large ribosomal subunit, where it forms part of the central protuberance. In Pseudoalteromonas translucida (strain TAC 125), this protein is Large ribosomal subunit protein uL18.